A 596-amino-acid polypeptide reads, in one-letter code: Uptake hydrogenase large subunit (596 aa).

The Ni(2+) site is built by Cys-75, Cys-78, Cys-575, and Cys-578.

The protein belongs to the [NiFe]/[NiFeSe] hydrogenase large subunit family. As to quaternary structure, heterodimer of a large and a small subunit. Ni(2+) is required as a cofactor.

It localises to the cell membrane. It catalyses the reaction H2 + A = AH2. Its function is as follows. This enzyme recycles the H(2) produced by nitrogenase to increase the production of ATP and to protect nitrogenase against inhibition or damage by O(2) under carbon- or phosphate-limited conditions. The sequence is that of Uptake hydrogenase large subunit (hupB) from Rhizobium leguminosarum bv. viciae.